The primary structure comprises 1077 residues: Response regulator SSK1 (1077 aa).

In terms of domain architecture, Response regulatory spans Asn854 to Gly1000. At Asp903 the chain carries 4-aspartylphosphate.

It belongs to the SSK1 family.

The protein localises to the cytoplasm. Two-domain response regulator protein in the two-component signal transduction system of the HOG1 pathway. Involved in multi-stress responses and is essential for conidiation, secondary metabolism, autophagy and endocyrosis. In addition, regulates mycelial growth, cell nucleus development, septum formation, and organelle development. Also regulates trap formation and thus plays a crucial role in pathogenicity. The protein is Response regulator SSK1 of Arthrobotrys oligospora (strain ATCC 24927 / CBS 115.81 / DSM 1491) (Nematode-trapping fungus).